Consider the following 306-residue polypeptide: UDP-N-acetylenolpyruvoylglucosamine reductase (306 aa).

One can recognise an FAD-binding PCMH-type domain in the interval 34–198; the sequence is VGGPADLLIT…LEVTFKLHNS (165 aa). The active site involves Arg177. The active-site Proton donor is the Ser227. Glu297 is an active-site residue.

Belongs to the MurB family. FAD serves as cofactor.

It localises to the cytoplasm. It carries out the reaction UDP-N-acetyl-alpha-D-muramate + NADP(+) = UDP-N-acetyl-3-O-(1-carboxyvinyl)-alpha-D-glucosamine + NADPH + H(+). The protein operates within cell wall biogenesis; peptidoglycan biosynthesis. Functionally, cell wall formation. The sequence is that of UDP-N-acetylenolpyruvoylglucosamine reductase from Clostridium botulinum (strain Okra / Type B1).